We begin with the raw amino-acid sequence, 59 residues long: Cecropin-B2 (59 aa).

The first 23 residues, 1–23 (MNFNKLFLIVILAALLLLGQTEA), serve as a signal peptide directing secretion. Leu57 is subject to Leucine amide.

The protein belongs to the cecropin family.

The protein localises to the secreted. Its function is as follows. Cecropins have lytic and antibacterial activity against several Gram-positive and Gram-negative bacteria. This Culex pipiens pipiens (Northern house mosquito) protein is Cecropin-B2 (CECB2).